We begin with the raw amino-acid sequence, 195 residues long: ADP-ribosylation factor L (195 aa).

The N-myristoyl glycine moiety is linked to residue Gly-2. GTP is bound by residues 25–32 (GLENSGKT), 72–76 (DLLYP), and 131–134 (NKQD).

The protein belongs to the small GTPase superfamily. Arf family.

Functionally, may be involved in trafficking events within the endosomal system. The sequence is that of ADP-ribosylation factor L (arrL) from Dictyostelium discoideum (Social amoeba).